Reading from the N-terminus, the 349-residue chain is D-alanine--D-alanine ligase (349 aa).

Residues 140 to 345 (NILFEAMGIP…MKDVFTWLLE (206 aa)) enclose the ATP-grasp domain. Residue 169–224 (NLSFSYPVFIKPTLGGSSVNTGMAKTAEEAMTLVDKIFVTDDRVLVQKLVSGTEVS) participates in ATP binding. Aspartate 300, glutamate 312, and asparagine 314 together coordinate Mg(2+).

It belongs to the D-alanine--D-alanine ligase family. It depends on Mg(2+) as a cofactor. Requires Mn(2+) as cofactor.

The protein resides in the cytoplasm. It carries out the reaction 2 D-alanine + ATP = D-alanyl-D-alanine + ADP + phosphate + H(+). It participates in cell wall biogenesis; peptidoglycan biosynthesis. Functionally, cell wall formation. This Leptospira biflexa serovar Patoc (strain Patoc 1 / Ames) protein is D-alanine--D-alanine ligase.